Here is a 213-residue protein sequence, read N- to C-terminus: Ras-related protein Rab-39B (213 aa).

Residues Ser-17, Gly-20, Lys-21, Ser-22, Cys-23, Ser-37, and Thr-40 each coordinate GTP. Ser-22 serves as a coordination point for Mg(2+). The tract at residues 35–43 is switch-I; the sequence is QVSDPTVGV. Positions 40 and 64 each coordinate Mg(2+). GTP is bound by residues Gly-67, His-123, Lys-124, Asp-126, Ala-154, and Arg-155. Residues 67-83 are switch-II; the sequence is GQERFRSITRAYYRNSV. Phosphoserine is present on Ser-201. S-geranylgeranyl cysteine attachment occurs at residues Cys-211 and Cys-213. Cys-213 is modified (cysteine methyl ester).

It belongs to the small GTPase superfamily. Rab family. Interacts (GDP-bound) with C9orf72; C9orf72 in complex with SMCR8 acts as a GEF for RAB39B. Interacts (in GTP-bound form) with PICK1 (via PDZ domain); a PICK1 homodimer may allow simultaneous association of RAB39B and GRIA2 to PICK1 which is involved in GRIA2 trafficking. Interacts with isoform c of RASSF1; the interaction is strong. Interacts with isoform a of RASSF1; the interaction is weak. Interacts with the DLG4/PSD-95. Interacts (GTP-bound) with HOPS complex components VPS39 and VPS41. Mg(2+) serves as cofactor. As to expression, specifically expressed in neuron and neuronal precursors in the brain. Expression is high in all regions of the brain with highest levels observed in the hippocampus.

The protein localises to the cell membrane. The protein resides in the cytoplasmic vesicle membrane. Its subcellular location is the golgi apparatus. It is found in the cytoplasmic vesicle. It localises to the autophagosome membrane. The protein localises to the autolysosome membrane. The catalysed reaction is GTP + H2O = GDP + phosphate + H(+). Its activity is regulated as follows. Regulated by guanine nucleotide exchange factors (GEFs) including C9orf72-SMCR8 complex, which promote the exchange of bound GDP for free GTP. Regulated by GTPase activating proteins (GAPs) which increase the GTP hydrolysis activity. Inhibited by GDP dissociation inhibitors (GDIs). Its function is as follows. The small GTPases Rab are key regulators of intracellular membrane trafficking, from the formation of transport vesicles to their fusion with membranes. Rabs cycle between an inactive GDP-bound form and an active GTP-bound form that is able to recruit to membranes different sets of downstream effectors directly responsible for vesicle formation, movement, tethering and fusion. RAB39B is involved in autophagy and may function in autophagosome formation. Binds downstream effector PICK1 to ensure selectively GRIA2 exit from the endoplasmic reticulum to the Golgi and to regulate AMPAR composition at the post-synapses and thus synaptic transmission. May regulate the homeostasis of SNCA/alpha-synuclein. This Mus musculus (Mouse) protein is Ras-related protein Rab-39B.